We begin with the raw amino-acid sequence, 750 residues long: Photosystem I P700 chlorophyll a apoprotein A1 (750 aa).

8 consecutive transmembrane segments (helical) span residues 70–93 (VFSA…FHGA), 156–179 (LYCT…FHYH), 195–219 (LNHH…HVSL), 291–309 (IAHH…GHMY), 346–369 (WHAQ…HHMY), 385–411 (LSLF…IFMV), 433–455 (AIIS…LYIH), and 531–549 (FLVH…LILL). Residues cysteine 573 and cysteine 582 each coordinate [4Fe-4S] cluster. A run of 2 helical transmembrane segments spans residues 589-610 (HVFL…HFSW) and 664-686 (LSAY…MFLF). A chlorophyll a'-binding site is contributed by histidine 675. Methionine 683 and tyrosine 691 together coordinate chlorophyll a. Tryptophan 692 lines the phylloquinone pocket. The helical transmembrane segment at 724–744 (AVGVTHYLLGGIATTWAFFLA) threads the bilayer.

Belongs to the PsaA/PsaB family. The PsaA/B heterodimer binds the P700 chlorophyll special pair and subsequent electron acceptors. PSI consists of a core antenna complex that captures photons, and an electron transfer chain that converts photonic excitation into a charge separation. The eukaryotic PSI reaction center is composed of at least 11 subunits. P700 is a chlorophyll a/chlorophyll a' dimer, A0 is one or more chlorophyll a, A1 is one or both phylloquinones and FX is a shared 4Fe-4S iron-sulfur center. is required as a cofactor.

Its subcellular location is the plastid. It localises to the chloroplast thylakoid membrane. The catalysed reaction is reduced [plastocyanin] + hnu + oxidized [2Fe-2S]-[ferredoxin] = oxidized [plastocyanin] + reduced [2Fe-2S]-[ferredoxin]. In terms of biological role, psaA and PsaB bind P700, the primary electron donor of photosystem I (PSI), as well as the electron acceptors A0, A1 and FX. PSI is a plastocyanin-ferredoxin oxidoreductase, converting photonic excitation into a charge separation, which transfers an electron from the donor P700 chlorophyll pair to the spectroscopically characterized acceptors A0, A1, FX, FA and FB in turn. Oxidized P700 is reduced on the lumenal side of the thylakoid membrane by plastocyanin. In Atropa belladonna (Belladonna), this protein is Photosystem I P700 chlorophyll a apoprotein A1.